Here is a 342-residue protein sequence, read N- to C-terminus: Fatty acid desaturase 6 (342 aa).

2 helical membrane-spanning segments follow: residues 39 to 59 (GVDCAILALSLLALPAGFLCL) and 63 to 83 (NILAFATGITILGVCHYTLTV). The short motif at 87-91 (HLATH) is the Histidine box-1 element. Residues 100-120 (WSKILMIFFLEVCTAFSAEFA) traverse the membrane as a helical segment. The Histidine box-2 signature appears at 124-128 (HVNLH). The next 2 helical transmembrane spans lie at 151-171 (YVYMFLGPLLVPIITPLVALE) and 185-205 (LGFICLGLYSQYWLFMNVSGF). The short motif at 277–281 (HVEHH) is the Histidine box-3 element.

This sequence belongs to the fatty acid desaturase type 1 family.

The protein resides in the membrane. It functions in the pathway lipid metabolism; fatty acid metabolism. The sequence is that of Fatty acid desaturase 6 (Fads6) from Mus musculus (Mouse).